Consider the following 201-residue polypeptide: ADP-ribosylation factor-related protein 1 (201 aa).

Methionine 1 bears the N-acetylmethionine mark. Residues 24–31 (GLDNAGKT), 75–79 (DLGGQ), and 134–137 (NKQD) each bind GTP.

This sequence belongs to the small GTPase superfamily. Arf family. As to quaternary structure, interacts with SYS1.

The protein localises to the golgi apparatus. It localises to the trans-Golgi network. Functionally, trans-Golgi-associated GTPase that regulates protein sorting. Controls the targeting of ARL1 and its effector to the trans-Golgi. Required for the lipidation of chylomicrons in the intestine and required for VLDL lipidation in the liver. In Pongo abelii (Sumatran orangutan), this protein is ADP-ribosylation factor-related protein 1 (ARFRP1).